A 34-amino-acid polypeptide reads, in one-letter code: Trypsin inhibitor 1 (34 aa).

The segment at residues 1-34 (SGSDGGVCPKILQRCRRDSDCPGACICRGNGYCG) is a cross-link (cyclopeptide (Ser-Gly)). Cystine bridges form between Cys-8-Cys-25, Cys-15-Cys-27, and Cys-21-Cys-33.

In terms of processing, this is a cyclic peptide.

Its subcellular location is the secreted. Its function is as follows. Inhibits trypsin; probably participates in a plant defense mechanism. The chain is Trypsin inhibitor 1 from Momordica cochinchinensis (Spiny bitter cucumber).